Reading from the N-terminus, the 174-residue chain is MLDRDGYRPNVGIILTNAKNEVFWGKRVREHSWQFPQGGIKPGESPEAAMYRELLEEVGLLPQHVKILGRTRDWLRYEVPTNWVRREWRGSYKGQKQIWFLLRLVGRDSDVCLRATNHPEFDGWRWNDYWAPVDAVIEFKRDVYERALSELARFMRGVESHHAYLARTSTQSEQ.

Residues 6-149 (GYRPNVGIIL…KRDVYERALS (144 aa)) form the Nudix hydrolase domain. A Nudix box motif is present at residues 38–59 (GGIKPGESPEAAMYRELLEEVG).

Belongs to the Nudix hydrolase family. RppH subfamily. A divalent metal cation serves as cofactor.

Its function is as follows. Accelerates the degradation of transcripts by removing pyrophosphate from the 5'-end of triphosphorylated RNA, leading to a more labile monophosphorylated state that can stimulate subsequent ribonuclease cleavage. This Chromobacterium violaceum (strain ATCC 12472 / DSM 30191 / JCM 1249 / CCUG 213 / NBRC 12614 / NCIMB 9131 / NCTC 9757 / MK) protein is RNA pyrophosphohydrolase.